We begin with the raw amino-acid sequence, 159 residues long: Phosphopantetheine adenylyltransferase (159 aa).

Threonine 9 contributes to the substrate binding site. ATP-binding positions include 9–10 (TF) and histidine 17. Substrate-binding residues include lysine 41, leucine 73, and arginine 87. Residues 88–90 (GLR), glutamate 98, and 123–129 (YSFISST) each bind ATP.

The protein belongs to the bacterial CoaD family. Homohexamer. It depends on Mg(2+) as a cofactor.

Its subcellular location is the cytoplasm. The catalysed reaction is (R)-4'-phosphopantetheine + ATP + H(+) = 3'-dephospho-CoA + diphosphate. Its pathway is cofactor biosynthesis; coenzyme A biosynthesis; CoA from (R)-pantothenate: step 4/5. Reversibly transfers an adenylyl group from ATP to 4'-phosphopantetheine, yielding dephospho-CoA (dPCoA) and pyrophosphate. The protein is Phosphopantetheine adenylyltransferase of Pseudomonas fluorescens (strain ATCC BAA-477 / NRRL B-23932 / Pf-5).